Reading from the N-terminus, the 374-residue chain is Multicilin (374 aa).

Residues E164–L212 adopt a coiled-coil conformation. The disordered stretch occupies residues R230–S260. A TIRT domain region spans residues T330–N374.

This sequence belongs to the geminin family. As to quaternary structure, component of the EDM complex, at least composed of e2f4, e2f5, mcidas and tfdp1. In terms of tissue distribution, expressed in multiciliate differentiating cells. Expression is lost by stage 26, when multiciliate cells in the skin are fully differentiated, but is then detected in the developing nephrostomes of the kidneys where multiciliate cells form at later stages.

The protein localises to the nucleus. Its function is as follows. Transcription regulator specifically required for multiciliate cell differentiation. Acts in a multiprotein complex containing E2F4 and E2F5 that binds and activates genes required for centriole biogenesis. Activates genes required for centriole assembly (plk4, cep152) and genes specifically required for motile cilia formation (foxj1). Also promotes the deuterosome pathway of centriole biogenesis by activating expression of ccdc67/deup1, but not its paralog cep63. This chain is Multicilin (mcidas), found in Xenopus laevis (African clawed frog).